Consider the following 215-residue polypeptide: Cytochrome c biogenesis ATP-binding export protein CcmA (215 aa).

The region spanning 3–211 (LTAEILAARR…KMTGFAGVDN (209 aa)) is the ABC transporter domain. Residue 35–42 (GKNGSGKS) coordinates ATP.

This sequence belongs to the ABC transporter superfamily. CcmA exporter (TC 3.A.1.107) family. As to quaternary structure, the complex is composed of two ATP-binding proteins (CcmA) and two transmembrane proteins (CcmB).

It is found in the cell inner membrane. It carries out the reaction heme b(in) + ATP + H2O = heme b(out) + ADP + phosphate + H(+). Functionally, part of the ABC transporter complex CcmAB involved in the biogenesis of c-type cytochromes; once thought to export heme, this seems not to be the case, but its exact role is uncertain. Responsible for energy coupling to the transport system. In Rhizobium johnstonii (strain DSM 114642 / LMG 32736 / 3841) (Rhizobium leguminosarum bv. viciae), this protein is Cytochrome c biogenesis ATP-binding export protein CcmA.